A 501-amino-acid polypeptide reads, in one-letter code: Cobyric acid synthase (501 aa).

A GATase cobBQ-type domain is found at 253–450 (EIEIAVLKLP…LHGIFENGRW (198 aa)). C334 (nucleophile) is an active-site residue. Residue H442 is part of the active site.

It belongs to the CobB/CobQ family. CobQ subfamily.

It functions in the pathway cofactor biosynthesis; adenosylcobalamin biosynthesis. Functionally, catalyzes amidations at positions B, D, E, and G on adenosylcobyrinic A,C-diamide. NH(2) groups are provided by glutamine, and one molecule of ATP is hydrogenolyzed for each amidation. The protein is Cobyric acid synthase of Prochlorococcus marinus (strain MIT 9313).